The primary structure comprises 124 residues: Large-conductance mechanosensitive channel (124 aa).

The next 3 membrane-spanning stretches (helical) occupy residues 14-34 (VIDL…VQSL), 37-57 (NLIN…NLVF), and 67-87 (GSFI…FLIV).

It belongs to the MscL family. As to quaternary structure, homopentamer.

It is found in the cell membrane. Its function is as follows. Channel that opens in response to stretch forces in the membrane lipid bilayer. May participate in the regulation of osmotic pressure changes within the cell. This chain is Large-conductance mechanosensitive channel, found in Lactobacillus acidophilus (strain ATCC 700396 / NCK56 / N2 / NCFM).